Reading from the N-terminus, the 174-residue chain is Repair DNA polymerase X (174 aa).

An involved in ssDNA binding region spans residues 42–51; sequence REEKMLNDVD. Positions 49 and 51 each coordinate Mg(2+). An intrachain disulfide couples C81 to C86. A Mg(2+)-binding site is contributed by D100.

This sequence belongs to the DNA polymerase type-X family. The cofactor is Mg(2+).

Its subcellular location is the virion. The catalysed reaction is DNA(n) + a 2'-deoxyribonucleoside 5'-triphosphate = DNA(n+1) + diphosphate. Error-prone polymerase lacking a proofreading 3'-5' exonuclease which catalyzes the gap-filling reaction during the DNA repair process. Specifically binds intermediates in the single-nucleotide base-excision repair process. Also catalyzes DNA polymerization with low nucleotide-insertion fidelity. Probably acts as a strategic DNA mutase, which gives rise to a rapid emergence of variants. Generates mismatched G-G pairs, in that case, the polymerase first binds the deoxynucleotide followed by mismatch formation. Together with the viral DNA ligase, fills the single nucleotide gaps generated by the AP endonuclease. Binds DNA with high affinity via the helix alphaE. This Ornithodoros (relapsing fever ticks) protein is Repair DNA polymerase X.